Here is a 319-residue protein sequence, read N- to C-terminus: ATP-dependent 6-phosphofructokinase (319 aa).

Gly11 contributes to the ATP binding site. 21–25 (RAVVR) contributes to the ADP binding site. ATP is bound by residues 72–73 (RC) and 102–105 (GDGS). Residue Asp103 participates in Mg(2+) binding. 125–127 (TID) contacts substrate. Asp127 functions as the Proton acceptor in the catalytic mechanism. An ADP-binding site is contributed by Arg154. Residues Arg162 and 169 to 171 (MGR) contribute to the substrate site. ADP is bound by residues 185-187 (GAE), Arg211, and 213-215 (KKH). Residues Glu222, Arg243, and 249 to 252 (HVQR) contribute to the substrate site.

Belongs to the phosphofructokinase type A (PFKA) family. ATP-dependent PFK group I subfamily. Prokaryotic clade 'B1' sub-subfamily. As to quaternary structure, homotetramer. Mg(2+) serves as cofactor.

The protein localises to the cytoplasm. It carries out the reaction beta-D-fructose 6-phosphate + ATP = beta-D-fructose 1,6-bisphosphate + ADP + H(+). It participates in carbohydrate degradation; glycolysis; D-glyceraldehyde 3-phosphate and glycerone phosphate from D-glucose: step 3/4. With respect to regulation, allosterically activated by ADP and other diphosphonucleosides, and allosterically inhibited by phosphoenolpyruvate. In terms of biological role, catalyzes the phosphorylation of D-fructose 6-phosphate to fructose 1,6-bisphosphate by ATP, the first committing step of glycolysis. The polypeptide is ATP-dependent 6-phosphofructokinase (Bacillus cytotoxicus (strain DSM 22905 / CIP 110041 / 391-98 / NVH 391-98)).